A 62-amino-acid polypeptide reads, in one-letter code: Large ribosomal subunit protein bL28 (62 aa).

It belongs to the bacterial ribosomal protein bL28 family.

The sequence is that of Large ribosomal subunit protein bL28 from Phytoplasma mali (strain AT).